A 347-amino-acid chain; its full sequence is UDP-N-acetylenolpyruvoylglucosamine reductase (347 aa).

One can recognise an FAD-binding PCMH-type domain in the interval 24 to 195 (FDARARVAAR…VAVTFRLPKA (172 aa)). Arginine 171 is an active-site residue. Serine 247 serves as the catalytic Proton donor. The active site involves glutamate 343.

This sequence belongs to the MurB family. The cofactor is FAD.

It is found in the cytoplasm. It carries out the reaction UDP-N-acetyl-alpha-D-muramate + NADP(+) = UDP-N-acetyl-3-O-(1-carboxyvinyl)-alpha-D-glucosamine + NADPH + H(+). It functions in the pathway cell wall biogenesis; peptidoglycan biosynthesis. Functionally, cell wall formation. This Burkholderia mallei (strain NCTC 10247) protein is UDP-N-acetylenolpyruvoylglucosamine reductase.